Here is a 300-residue protein sequence, read N- to C-terminus: NADH-cytochrome b5 reductase 1 (300 aa).

The chain crosses the membrane as a helical span at residues 8–28; sequence PLVVFATVATIIISFVTLYFF. Over residues 34–45 the composition is skewed to low complexity; the sequence is SSTTSSSSSSSS. The interval 34 to 54 is disordered; that stretch reads SSTTSSSSSSSSKSKKGSPAL. The FAD-binding FR-type domain occupies 57–160; it reads DKFQKFPLIS…RGPKGFFTYT (104 aa). FAD contacts are provided by residues 140–155 and 166–198; these read AEKQ…GPKG and SLGL…KVHL.

The protein belongs to the flavoprotein pyridine nucleotide cytochrome reductase family. As to quaternary structure, monomer. Component of the 2-(3-amino-3-carboxypropyl)histidine synthase complex composed of DPH1, DPH2, DPH3 and a NADH-dependent reductase, predominantly CBR1. FAD is required as a cofactor.

The protein localises to the mitochondrion outer membrane. It carries out the reaction 2 Fe(III)-[cytochrome b5] + NADH = 2 Fe(II)-[cytochrome b5] + NAD(+) + H(+). It catalyses the reaction 2 Fe(3+)-[Dph3] + NADH = 2 Fe(2+)-[Dph3] + NAD(+) + H(+). It functions in the pathway protein modification; peptidyl-diphthamide biosynthesis. Functionally, NADH-dependent reductase for DPH3 and cytochrome b5. Required for the first step of diphthamide biosynthesis, a post-translational modification of histidine which occurs in elongation factor 2. DPH1 and DPH2 transfer a 3-amino-3-carboxypropyl (ACP) group from S-adenosyl-L-methionine (SAM) to a histidine residue, the reaction is assisted by a reduction system comprising DPH3 and a NADH-dependent reductase, predominantly CBR1. By reducing DPH3, also involved in the formation of the tRNA wobble base modification mcm5s 2U (5-methoxycarbonylmethyl-2-thiouridine), mediated by the elongator complex. The cytochrome b5/NADH cytochrome b5 reductase electron transfer system supports the catalytic activity of several sterol biosynthetic enzymes. The polypeptide is NADH-cytochrome b5 reductase 1 (CBR1) (Lodderomyces elongisporus (strain ATCC 11503 / CBS 2605 / JCM 1781 / NBRC 1676 / NRRL YB-4239) (Yeast)).